A 422-amino-acid chain; its full sequence is Glutamate-1-semialdehyde 2,1-aminomutase (422 aa).

K264 bears the N6-(pyridoxal phosphate)lysine mark.

It belongs to the class-III pyridoxal-phosphate-dependent aminotransferase family. HemL subfamily. As to quaternary structure, homodimer. Pyridoxal 5'-phosphate is required as a cofactor.

The protein resides in the cytoplasm. The catalysed reaction is (S)-4-amino-5-oxopentanoate = 5-aminolevulinate. It functions in the pathway porphyrin-containing compound metabolism; protoporphyrin-IX biosynthesis; 5-aminolevulinate from L-glutamyl-tRNA(Glu): step 2/2. The protein is Glutamate-1-semialdehyde 2,1-aminomutase of Clostridium kluyveri (strain ATCC 8527 / DSM 555 / NBRC 12016 / NCIMB 10680 / K1).